The following is an 88-amino-acid chain: UPF0367 protein Synpcc7942_1638 (88 aa).

It belongs to the UPF0367 family.

The sequence is that of UPF0367 protein Synpcc7942_1638 from Synechococcus elongatus (strain ATCC 33912 / PCC 7942 / FACHB-805) (Anacystis nidulans R2).